A 239-amino-acid polypeptide reads, in one-letter code: Small ribosomal subunit protein eS4 (239 aa).

The 63-residue stretch at 37–99 folds into the S4 RNA-binding domain; it reads IPLAVVIRDY…ADLYFRVIPD (63 aa).

Belongs to the eukaryotic ribosomal protein eS4 family.

This is Small ribosomal subunit protein eS4 from Saccharolobus islandicus (strain Y.N.15.51 / Yellowstone #2) (Sulfolobus islandicus).